The chain runs to 344 residues: Meiotic recombination protein DMC1 homolog A (344 aa).

133–140 contacts ATP; the sequence is GEFRSGKT. A dsDNA-binding site is contributed by Arg235. SsDNA-binding residues include Arg235, Phe238, Arg241, Arg247, and Arg315. 2 residues coordinate dsDNA: Arg241 and Arg247.

This sequence belongs to the RecA family. DMC1 subfamily. As to expression, expressed in meiotic young panicles.

The protein resides in the nucleus. Functionally, recombinase that may participate in meiotic recombination, specifically in homologous strand assimilation, which is required for the resolution of meiotic double-strand breaks. Exhibits DNA-dependent ATPase activity when bound to single-stranded DNA (ssDNA). Mediates renaturation of homologous complementary strands as well as assimilation of single strands into homologous supercoiled duplexes leading to D-loop formation. Binds circular single-stranded DNA (ssDNA) and circular double-stranded DNA (dsDNA) in vitro. Catalyzes DNA homologous renaturation and DNA strand exchange. The rates of these activities are dependent on the state of ATP hydrolysis. Forms helical filaments along ssDNA and dsDNA, and promotes strand exchange between ssDNA and dsDNA with long DNA substrates of several thousand base pairs. The presence of the replication protein A is not required for this activity. Seems to be required for homologous pairing and subsequent chromosome segregation during male meiosis. May be not directly required for homologous pairing during male meiosis. Required for synaptonemal complex assembly and crossover formation. Functions redundantly with DMC1B. This Oryza sativa subsp. japonica (Rice) protein is Meiotic recombination protein DMC1 homolog A.